A 372-amino-acid polypeptide reads, in one-letter code: Aminomethyltransferase (372 aa).

This sequence belongs to the GcvT family. In terms of assembly, the glycine cleavage system is composed of four proteins: P, T, L and H.

It catalyses the reaction N(6)-[(R)-S(8)-aminomethyldihydrolipoyl]-L-lysyl-[protein] + (6S)-5,6,7,8-tetrahydrofolate = N(6)-[(R)-dihydrolipoyl]-L-lysyl-[protein] + (6R)-5,10-methylene-5,6,7,8-tetrahydrofolate + NH4(+). Functionally, the glycine cleavage system catalyzes the degradation of glycine. This chain is Aminomethyltransferase, found in Burkholderia mallei (strain NCTC 10247).